The following is a 256-amino-acid chain: Imidazole glycerol phosphate synthase subunit HisF (256 aa).

Active-site residues include Asp12 and Asp131.

The protein belongs to the HisA/HisF family. As to quaternary structure, heterodimer of HisH and HisF.

The protein resides in the cytoplasm. The enzyme catalyses 5-[(5-phospho-1-deoxy-D-ribulos-1-ylimino)methylamino]-1-(5-phospho-beta-D-ribosyl)imidazole-4-carboxamide + L-glutamine = D-erythro-1-(imidazol-4-yl)glycerol 3-phosphate + 5-amino-1-(5-phospho-beta-D-ribosyl)imidazole-4-carboxamide + L-glutamate + H(+). Its pathway is amino-acid biosynthesis; L-histidine biosynthesis; L-histidine from 5-phospho-alpha-D-ribose 1-diphosphate: step 5/9. In terms of biological role, IGPS catalyzes the conversion of PRFAR and glutamine to IGP, AICAR and glutamate. The HisF subunit catalyzes the cyclization activity that produces IGP and AICAR from PRFAR using the ammonia provided by the HisH subunit. The sequence is that of Imidazole glycerol phosphate synthase subunit HisF from Pseudomonas syringae pv. syringae (strain B728a).